A 53-amino-acid polypeptide reads, in one-letter code: Large ribosomal subunit protein uL30 (53 aa).

The protein belongs to the universal ribosomal protein uL30 family. As to quaternary structure, part of the 50S ribosomal subunit.

The protein is Large ribosomal subunit protein uL30 of Deinococcus geothermalis (strain DSM 11300 / CIP 105573 / AG-3a).